A 76-amino-acid polypeptide reads, in one-letter code: Small ribosomal subunit protein bS18 (76 aa).

The protein belongs to the bacterial ribosomal protein bS18 family. Part of the 30S ribosomal subunit. Forms a tight heterodimer with protein bS6.

In terms of biological role, binds as a heterodimer with protein bS6 to the central domain of the 16S rRNA, where it helps stabilize the platform of the 30S subunit. In Xanthomonas campestris pv. campestris (strain 8004), this protein is Small ribosomal subunit protein bS18.